Here is a 525-residue protein sequence, read N- to C-terminus: Phosphatidylinositol 4-kinase alpha 2 (525 aa).

The pleckstrin homology (PH) domain conferring phosphoinositide binding specificity stretch occupies residues 163–278 (SDVRQHIVDG…VKPQACIFKV (116 aa)). One can recognise a PI3K/PI4K catalytic domain in the interval 239 to 509 (VDSGIPLQSA…VCTDAYNKWT (271 aa)). The G-loop stretch occupies residues 245–251 (LQSAAKV). Residues 373–381 (QPKDRHNGN) form a catalytic loop region. Positions 392–417 (HIDFGFILETSPGGNMRFENAHFKLS) are activation loop.

This sequence belongs to the PI3/PI4-kinase family. Type III PI4K subfamily.

It localises to the membrane. It carries out the reaction a 1,2-diacyl-sn-glycero-3-phospho-(1D-myo-inositol) + ATP = a 1,2-diacyl-sn-glycero-3-phospho-(1D-myo-inositol 4-phosphate) + ADP + H(+). Acts on phosphatidylinositol (PtdIns) in the first committed step in the production of the second messenger inositol-1,4,5,-trisphosphate. This is Phosphatidylinositol 4-kinase alpha 2 (PI4KA2) from Arabidopsis thaliana (Mouse-ear cress).